We begin with the raw amino-acid sequence, 4010 residues long: Extracellular matrix organizing protein FRAS1 (4010 aa).

The first 25 residues, 1–25 (MGVLKAWLGVALALAEFAVLPNCEG), serve as a signal peptide directing secretion. VWFC domains follow at residues 26–87 (ACLY…PQCA), 92–152 (GSCH…PICV), 156–216 (KPCS…SQCS), 218–278 (RSCS…EECA), and 282–342 (RSCS…PECI). Residues 26–3903 (ACLYQGSFLA…AASLSQTGAS (3878 aa)) are Extracellular-facing. Residue Ser-343 is modified to Phosphoserine. Residues 358 to 416 (SSSAREIKHVPDGEKWEEGPCKLCECREAQVTCYEPSCPPCPVATLALVVKGQCCPDCT) enclose the VWFC 6 domain. 14 FU repeats span residues 408–459 (KGQC…GFYQ), 461–504 (GSLC…GFYQ), 506–552 (HHSC…GFYN), 554–598 (QGTC…GYYA), 601–646 (TGSC…GFYP), 648–704 (HGIC…HFYL), 707–752 (TGLC…THFN), 754–799 (EGTC…EQFL), 802–851 (VGYC…GHYK), 853–899 (RGTC…GHYL), 902–947 (NQVC…QYYL), 951–996 (TKTC…QHYR), 998–1041 (SGSC…GYFA), and 1045–1088 (KHRC…GFSG). Asn-727 carries N-linked (GlcNAc...) asparagine glycosylation. Asn-1094 and Asn-1107 each carry an N-linked (GlcNAc...) asparagine glycan. CSPG repeat units follow at residues 1101–1196 (TPSL…LKIS), 1216–1307 (APYV…FQAN), 1328–1440 (ALRL…FQVS), 1465–1561 (APKL…FSFA), 1597–1691 (PAFQ…ISVT), 1712–1812 (GPRL…FSVS), and 1834–1938 (PPHI…FYVS). Asn-1506 is a glycosylation site (N-linked (GlcNAc...) asparagine). Asn-1779 is a glycosylation site (N-linked (GlcNAc...) asparagine). Asn-1950 and Asn-1980 each carry an N-linked (GlcNAc...) asparagine glycan. 5 CSPG repeats span residues 1959–2059 (EPPR…FSLT), 2080–2179 (IPHL…FDVV), 2201–2293 (PPVV…FVLS), 2313–2406 (ARPL…FTVS), and 2441–2538 (TPRI…FLVK). Calx-beta domains follow at residues 2545-2648 (VSDN…VGLS), 2661-2772 (AKVV…IALA), 2786-2892 (AKVL…VFLS), 2907-3009 (IAIN…VYLG), and 3027-3131 (ATVT…LVLG). N-linked (GlcNAc...) asparagine glycans are attached at residues Asn-2565, Asn-2666, and Asn-2684. Asn-2910, Asn-2987, Asn-3072, Asn-3220, Asn-3678, and Asn-3877 each carry an N-linked (GlcNAc...) asparagine glycan. Residues 3904-3924 (IGSALAAIMLLLLLFLVACFV) traverse the membrane as a helical segment. Over 3925–4010 (TRKCQKQKKK…HNNLQDGTEV (86 aa)) the chain is Cytoplasmic.

Belongs to the FRAS1 family.

The protein localises to the cell membrane. In terms of biological role, involved in extracellular matrix organization. Required for the regulation of epidermal-basement membrane adhesion responsible for proper organogenesis during embryonic development. Involved in brain organization and function. The chain is Extracellular matrix organizing protein FRAS1 from Mus musculus (Mouse).